Consider the following 340-residue polypeptide: Phenylalanine--tRNA ligase alpha subunit (340 aa).

A Mg(2+)-binding site is contributed by Glu258.

It belongs to the class-II aminoacyl-tRNA synthetase family. Phe-tRNA synthetase alpha subunit type 1 subfamily. In terms of assembly, tetramer of two alpha and two beta subunits. The cofactor is Mg(2+).

Its subcellular location is the cytoplasm. The catalysed reaction is tRNA(Phe) + L-phenylalanine + ATP = L-phenylalanyl-tRNA(Phe) + AMP + diphosphate + H(+). The polypeptide is Phenylalanine--tRNA ligase alpha subunit (Corynebacterium efficiens (strain DSM 44549 / YS-314 / AJ 12310 / JCM 11189 / NBRC 100395)).